We begin with the raw amino-acid sequence, 362 residues long: Biotin synthase (362 aa).

The region spanning 46–273 is the Radical SAM core domain; sequence NEVQVSTLLS…ASHVRLSAGR (228 aa). Residues Cys-61, Cys-65, and Cys-68 each contribute to the [4Fe-4S] cluster site. 4 residues coordinate [2Fe-2S] cluster: Cys-105, Cys-136, Cys-196, and Arg-268.

Belongs to the radical SAM superfamily. Biotin synthase family. As to quaternary structure, homodimer. The cofactor is [4Fe-4S] cluster. Requires [2Fe-2S] cluster as cofactor.

The enzyme catalyses (4R,5S)-dethiobiotin + (sulfur carrier)-SH + 2 reduced [2Fe-2S]-[ferredoxin] + 2 S-adenosyl-L-methionine = (sulfur carrier)-H + biotin + 2 5'-deoxyadenosine + 2 L-methionine + 2 oxidized [2Fe-2S]-[ferredoxin]. The protein operates within cofactor biosynthesis; biotin biosynthesis; biotin from 7,8-diaminononanoate: step 2/2. Its function is as follows. Catalyzes the conversion of dethiobiotin (DTB) to biotin by the insertion of a sulfur atom into dethiobiotin via a radical-based mechanism. This is Biotin synthase from Aeromonas salmonicida (strain A449).